Consider the following 384-residue polypeptide: 1-deoxy-D-xylulose 5-phosphate reductoisomerase (384 aa).

Residues Thr-10, Gly-11, Ser-12, Ile-13, Gly-36, Asn-38, and Asn-122 each contribute to the NADPH site. Lys-123 lines the 1-deoxy-D-xylulose 5-phosphate pocket. Glu-124 lines the NADPH pocket. Asp-148 provides a ligand contact to Mn(2+). Positions 149, 150, 174, and 197 each coordinate 1-deoxy-D-xylulose 5-phosphate. Glu-150 contributes to the Mn(2+) binding site. Residue Gly-203 coordinates NADPH. 4 residues coordinate 1-deoxy-D-xylulose 5-phosphate: Ser-210, Asn-215, Lys-216, and Glu-219. Glu-219 serves as a coordination point for Mn(2+).

The protein belongs to the DXR family. It depends on Mg(2+) as a cofactor. Requires Mn(2+) as cofactor.

It carries out the reaction 2-C-methyl-D-erythritol 4-phosphate + NADP(+) = 1-deoxy-D-xylulose 5-phosphate + NADPH + H(+). The protein operates within isoprenoid biosynthesis; isopentenyl diphosphate biosynthesis via DXP pathway; isopentenyl diphosphate from 1-deoxy-D-xylulose 5-phosphate: step 1/6. In terms of biological role, catalyzes the NADPH-dependent rearrangement and reduction of 1-deoxy-D-xylulose-5-phosphate (DXP) to 2-C-methyl-D-erythritol 4-phosphate (MEP). In Geobacter metallireducens (strain ATCC 53774 / DSM 7210 / GS-15), this protein is 1-deoxy-D-xylulose 5-phosphate reductoisomerase.